Reading from the N-terminus, the 367-residue chain is Testis-specific serine/threonine-protein kinase 1 (367 aa).

Residues 12 to 272 form the Protein kinase domain; the sequence is YLLGINLGEG…IDEILSHCWM (261 aa). ATP-binding positions include 18-26 and K41; that span reads LGEGSYAKV. The active-site Proton acceptor is D136. T174 is subject to Phosphothreonine. Residues 276–367 form a disordered region; that stretch reads ARGSPSVAIN…PQQPPETRAQ (92 aa). Over residues 303–314 the composition is skewed to basic and acidic residues; it reads GSDKKSATKLEP.

The protein belongs to the protein kinase superfamily. CAMK Ser/Thr protein kinase family. In terms of assembly, interacts with TSSK2. Interacts with HSP90; this interaction stabilizes TSSK1. Mg(2+) is required as a cofactor. Post-translationally, autophosphorylated. In terms of processing, ubiquitinated; HSP90 activity negatively regulates ubiquitination and degradation. In terms of tissue distribution, testis-specific. Present in sperm (at protein level).

The protein resides in the cytoplasm. Its subcellular location is the cytoplasmic vesicle. The protein localises to the secretory vesicle. It is found in the acrosome. It localises to the cell projection. The protein resides in the cilium. Its subcellular location is the flagellum. It catalyses the reaction L-seryl-[protein] + ATP = O-phospho-L-seryl-[protein] + ADP + H(+). The enzyme catalyses L-threonyl-[protein] + ATP = O-phospho-L-threonyl-[protein] + ADP + H(+). With respect to regulation, kinase activity is specifically inhibited by 2 classes of compounds: biphenyl compounds (1,1'-(biphenyl-4,4'-diyl)bis(2,2-dihydroxyethanone)) and 1,2,7-trialky-1H-imidazo[4,5-g]quinoxalin-6-one. Activated by phosphorylation on Thr-174 and potentially by autophosphorylation. In terms of biological role, testis-specific serine/threonine-protein kinase required during spermatid development. Phosphorylates 'Ser-288' of TSKS. Involved in the late stages of spermatogenesis, during the reconstruction of the cytoplasm. During spermatogenesis, required for the transformation of a ring-shaped structure around the base of the flagellum originating from the chromatoid body. This Homo sapiens (Human) protein is Testis-specific serine/threonine-protein kinase 1 (TSSK1B).